Here is a 369-residue protein sequence, read N- to C-terminus: Cobalt-precorrin-5B C(1)-methyltransferase (369 aa).

This sequence belongs to the CbiD family.

It catalyses the reaction Co-precorrin-5B + S-adenosyl-L-methionine = Co-precorrin-6A + S-adenosyl-L-homocysteine. It functions in the pathway cofactor biosynthesis; adenosylcobalamin biosynthesis; cob(II)yrinate a,c-diamide from sirohydrochlorin (anaerobic route): step 6/10. Catalyzes the methylation of C-1 in cobalt-precorrin-5B to form cobalt-precorrin-6A. This chain is Cobalt-precorrin-5B C(1)-methyltransferase, found in Brucella melitensis biotype 2 (strain ATCC 23457).